A 226-amino-acid polypeptide reads, in one-letter code: Cytidylate kinase (226 aa).

10–18 (GPASSGKST) contacts ATP.

This sequence belongs to the cytidylate kinase family. Type 1 subfamily.

The protein resides in the cytoplasm. It catalyses the reaction CMP + ATP = CDP + ADP. The enzyme catalyses dCMP + ATP = dCDP + ADP. The protein is Cytidylate kinase of Streptococcus pyogenes serotype M28 (strain MGAS6180).